A 200-amino-acid chain; its full sequence is Small ribosomal subunit protein uS4 (200 aa).

Residues 22 to 43 (TGKELERRPYAPGQHGPTQRKK) form a disordered region. The S4 RNA-binding domain maps to 92-170 (QRLDNIVYRL…VPEYVTFDAE (79 aa)).

The protein belongs to the universal ribosomal protein uS4 family. Part of the 30S ribosomal subunit. Contacts protein S5. The interaction surface between S4 and S5 is involved in control of translational fidelity.

One of the primary rRNA binding proteins, it binds directly to 16S rRNA where it nucleates assembly of the body of the 30S subunit. In terms of biological role, with S5 and S12 plays an important role in translational accuracy. The chain is Small ribosomal subunit protein uS4 from Listeria monocytogenes serovar 1/2a (strain ATCC BAA-679 / EGD-e).